The following is a 376-amino-acid chain: Respiration factor 1 (376 aa).

Disordered regions lie at residues 1 to 23 (MKDL…DNRG), 88 to 107 (VNVT…NSTK), 258 to 279 (FKEK…TGSS), and 347 to 376 (GVNE…QHTN). Positions 354 to 376 (NSSNLNNSNSGTPHNHNQNQHTN) are enriched in low complexity.

The protein resides in the cytoplasm. It localises to the nucleus. The protein localises to the mitochondrion. Mitochondrial and nuclear transcriptional activator required for respiratory growth. The chain is Respiration factor 1 (RSF1) from Saccharomyces cerevisiae (strain YJM789) (Baker's yeast).